Consider the following 86-residue polypeptide: Putative defensin-like protein 244 (86 aa).

The N-terminal stretch at 1–22 (MKGIAMLLVSCLLFSFLSTNLA) is a signal peptide. 4 disulfides stabilise this stretch: Cys28-Cys83, Cys38-Cys67, Cys48-Cys77, and Cys65-Cys79.

This sequence belongs to the DEFL family.

It is found in the secreted. The polypeptide is Putative defensin-like protein 244 (SCRL11) (Arabidopsis thaliana (Mouse-ear cress)).